The following is a 344-amino-acid chain: MKQTKTKYGKMKQMVSNLKLPDYRYEQLTKAIFHQRIDNFDDIHILPKALRMSLVNEFGKNVSSVIPVFSQDSKQAQKLLFELTDGERIEAVGLKYKQGWESFCISSQCGCGFGCRFCATGSAGFKRNLTADEITDQLLYFYFNNHRLNSISFMGMGEAFANPELFDAVKILTDQNLFGLSQRRITISTIGIIPGIQRLTKKFPQVNLAFSLHSPFESRRSDLMPINKRFPLNEVMKTLDEHIIHTGRRVFIAYIMLEGINDSKEHAEAVVGLLKNRGSWEHLYHIDLIPYNSTDKTTFKFQSSSAIKQFCSTLKKAGISATVRTQFGSEISAACGQLCYENEL.

Glu-90 serves as the catalytic Proton acceptor. One can recognise a Radical SAM core domain in the interval 97-330 (KQGWESFCIS…ATVRTQFGSE (234 aa)). Cys-104 and Cys-335 form a disulfide bridge. 3 residues coordinate [4Fe-4S] cluster: Cys-111, Cys-115, and Cys-118. Residues 157-158 (GE), Ser-188, 211-213 (SLH), and Asn-292 each bind S-adenosyl-L-methionine. Catalysis depends on Cys-335, which acts as the S-methylcysteine intermediate.

This sequence belongs to the radical SAM superfamily. RlmN family. Cfr subfamily. [4Fe-4S] cluster is required as a cofactor.

The protein localises to the cytoplasm. It carries out the reaction adenosine(2503) in 23S rRNA + 2 reduced [2Fe-2S]-[ferredoxin] + 2 S-adenosyl-L-methionine = 8-methyladenosine(2503) in 23S rRNA + 5'-deoxyadenosine + L-methionine + 2 oxidized [2Fe-2S]-[ferredoxin] + S-adenosyl-L-homocysteine. Functionally, specifically methylates position 8 of adenine 2503 in 23S rRNA. Confers resistance to some classes of antibiotics. This Clostridium botulinum (strain Okra / Type B1) protein is Ribosomal RNA large subunit methyltransferase Cfr.